Reading from the N-terminus, the 1169-residue chain is Chromosome partition protein Smc (1169 aa).

32-39 (PNGSGKSN) serves as a coordination point for ATP. A coiled-coil region spans residues 166–507 (DEISGIAEFD…RIKALKEMEE (342 aa)). An SMC hinge domain is found at 523–636 (PGIIDIVGNL…ENIDIAKELA (114 aa)). A coiled-coil region spans residues 676–1030 (SKLNKIADEI…NKKKEVFMEV (355 aa)).

This sequence belongs to the SMC family. As to quaternary structure, homodimer.

Its subcellular location is the cytoplasm. In terms of biological role, required for chromosome condensation and partitioning. The protein is Chromosome partition protein Smc of Methanocaldococcus jannaschii (strain ATCC 43067 / DSM 2661 / JAL-1 / JCM 10045 / NBRC 100440) (Methanococcus jannaschii).